Consider the following 305-residue polypeptide: MELIFLGTSAGVPTRSRNVTAILLHLQHPTQPGVWLFDCGEGTQHQMLNTAFHPGKLERIFISHLHGDHLFGLPGLLCSRSMAGNPHPLTVYGPQGVREFIATTLRLSGSWTDFPLQIEEISAGDILDDGLRKVTAFRLEHPLECYGYRVVEHDKPGALNARALKAAGVTPGPLFQALKAGKTVTLADGRQINGADYLAPAVAGKSVAIFGDTAPCEAALALAQGVDVMVHETTLDASMEEKANARGHSSTRQTATLAREAAVGRLIMTHISSRYDDKGCQRLLAECRAIFPATELAYDFSVFPV.

Residues His64, His66, Asp68, His69, His141, Asp212, and His270 each coordinate Zn(2+). Asp68 acts as the Proton acceptor in catalysis.

The protein belongs to the RNase Z family. RNase BN subfamily. Homodimer. The cofactor is Zn(2+).

Its function is as follows. Zinc phosphodiesterase, which has both exoribonuclease and endoribonuclease activities. This chain is Ribonuclease BN, found in Salmonella agona (strain SL483).